Consider the following 394-residue polypeptide: Flap endonuclease 1 (394 aa).

The segment at 1–104 (MGIKQLFSII…GELAKRFQRK (104 aa)) is N-domain. Aspartate 34 lines the Mg(2+) pocket. Residues arginine 47 and arginine 70 each coordinate DNA. Aspartate 86, glutamate 158, glutamate 160, aspartate 179, and aspartate 181 together coordinate Mg(2+). Residues 122 to 253 (DVEKFSRRTV…STALKLIREH (132 aa)) are I-domain. Glutamate 158 lines the DNA pocket. DNA-binding residues include glycine 231 and aspartate 233. Residue aspartate 233 participates in Mg(2+) binding. Residues 341-349 (QQARIEGFF) are interaction with PCNA. Over residues 356–383 (EEEKKAHKRKLEEQAEQKRKKVKEEKKE) the composition is skewed to basic and acidic residues. The segment at 356 to 394 (EEEKKAHKRKLEEQAEQKRKKVKEEKKEKAKLKAKPRGA) is disordered. Positions 384 to 394 (KAKLKAKPRGA) are enriched in basic residues.

The protein belongs to the XPG/RAD2 endonuclease family. FEN1 subfamily. As to quaternary structure, interacts with PCNA. Three molecules of FEN1 bind to one PCNA trimer with each molecule binding to one PCNA monomer. PCNA stimulates the nuclease activity without altering cleavage specificity. The cofactor is Mg(2+). Post-translationally, phosphorylated. Phosphorylation upon DNA damage induces relocalization to the nuclear plasma.

The protein localises to the nucleus. The protein resides in the nucleolus. It localises to the nucleoplasm. It is found in the mitochondrion. In terms of biological role, structure-specific nuclease with 5'-flap endonuclease and 5'-3' exonuclease activities involved in DNA replication and repair. During DNA replication, cleaves the 5'-overhanging flap structure that is generated by displacement synthesis when DNA polymerase encounters the 5'-end of a downstream Okazaki fragment. It enters the flap from the 5'-end and then tracks to cleave the flap base, leaving a nick for ligation. Also involved in the long patch base excision repair (LP-BER) pathway, by cleaving within the apurinic/apyrimidinic (AP) site-terminated flap. Acts as a genome stabilization factor that prevents flaps from equilibrating into structures that lead to duplications and deletions. Also possesses 5'-3' exonuclease activity on nicked or gapped double-stranded DNA, and exhibits RNase H activity. Also involved in replication and repair of rDNA and in repairing mitochondrial DNA. This Sordaria macrospora (strain ATCC MYA-333 / DSM 997 / K(L3346) / K-hell) protein is Flap endonuclease 1.